The following is a 161-amino-acid chain: Large ribosomal subunit protein uL29c (161 aa).

The N-terminal 61 residues, 1 to 61 (MATMSLAAAS…ERRAAAMVAM (61 aa)), are a transit peptide targeting the chloroplast.

The protein belongs to the universal ribosomal protein uL29 family. As to quaternary structure, part of the 50S ribosomal subunit.

Its subcellular location is the plastid. It localises to the chloroplast. This chain is Large ribosomal subunit protein uL29c (RPL29), found in Zea mays (Maize).